A 583-amino-acid polypeptide reads, in one-letter code: 2-succinyl-5-enolpyruvyl-6-hydroxy-3-cyclohexene-1-carboxylate synthase (583 aa).

It belongs to the TPP enzyme family. MenD subfamily. In terms of assembly, homodimer. Mg(2+) serves as cofactor. Mn(2+) is required as a cofactor. It depends on thiamine diphosphate as a cofactor.

It catalyses the reaction isochorismate + 2-oxoglutarate + H(+) = 5-enolpyruvoyl-6-hydroxy-2-succinyl-cyclohex-3-ene-1-carboxylate + CO2. The protein operates within quinol/quinone metabolism; 1,4-dihydroxy-2-naphthoate biosynthesis; 1,4-dihydroxy-2-naphthoate from chorismate: step 2/7. It functions in the pathway quinol/quinone metabolism; menaquinone biosynthesis. Functionally, catalyzes the thiamine diphosphate-dependent decarboxylation of 2-oxoglutarate and the subsequent addition of the resulting succinic semialdehyde-thiamine pyrophosphate anion to isochorismate to yield 2-succinyl-5-enolpyruvyl-6-hydroxy-3-cyclohexene-1-carboxylate (SEPHCHC). This is 2-succinyl-5-enolpyruvyl-6-hydroxy-3-cyclohexene-1-carboxylate synthase from Chlorobium limicola (strain DSM 245 / NBRC 103803 / 6330).